A 472-amino-acid polypeptide reads, in one-letter code: L-fuculokinase (472 aa).

It belongs to the FGGY kinase family. It depends on a divalent metal cation as a cofactor.

It carries out the reaction L-fuculose + ATP = L-fuculose 1-phosphate + ADP + H(+). Its pathway is carbohydrate degradation; L-fucose degradation; L-lactaldehyde and glycerone phosphate from L-fucose: step 2/3. Functionally, catalyzes the phosphorylation of L-fuculose. The polypeptide is L-fuculokinase (Escherichia coli O157:H7).